A 491-amino-acid polypeptide reads, in one-letter code: Adenylosuccinate synthetase, chloroplastic (491 aa).

GTP is bound by residues 78 to 84 (GDEGKGK) and 106 to 108 (GHT). The active-site Proton acceptor is Asp79. Residues Asp79 and Gly106 each contribute to the Mg(2+) site. IMP contacts are provided by residues 79–82 (DEGK), 104–107 (NAGH), Thr196, Arg210, Gln290, Thr305, and Arg369. His107 (proton donor) is an active-site residue. Position 365–371 (365–371 (TTTGRPR)) interacts with substrate. Residues Arg371, 397–399 (KLD), and 480–482 (GIG) each bind GTP.

Belongs to the adenylosuccinate synthetase family. In terms of assembly, homodimer. Mg(2+) is required as a cofactor.

The protein resides in the plastid. Its subcellular location is the chloroplast. The enzyme catalyses IMP + L-aspartate + GTP = N(6)-(1,2-dicarboxyethyl)-AMP + GDP + phosphate + 2 H(+). Its pathway is purine metabolism; AMP biosynthesis via de novo pathway; AMP from IMP: step 1/2. Its function is as follows. Plays an important role in the de novo pathway and in the salvage pathway of purine nucleotide biosynthesis. Catalyzes the first committed step in the biosynthesis of AMP from IMP. This chain is Adenylosuccinate synthetase, chloroplastic, found in Populus trichocarpa (Western balsam poplar).